The primary structure comprises 296 residues: Phosphoribosylaminoimidazole-succinocarboxamide synthase (296 aa).

This sequence belongs to the SAICAR synthetase family.

The enzyme catalyses 5-amino-1-(5-phospho-D-ribosyl)imidazole-4-carboxylate + L-aspartate + ATP = (2S)-2-[5-amino-1-(5-phospho-beta-D-ribosyl)imidazole-4-carboxamido]succinate + ADP + phosphate + 2 H(+). It functions in the pathway purine metabolism; IMP biosynthesis via de novo pathway; 5-amino-1-(5-phospho-D-ribosyl)imidazole-4-carboxamide from 5-amino-1-(5-phospho-D-ribosyl)imidazole-4-carboxylate: step 1/2. The chain is Phosphoribosylaminoimidazole-succinocarboxamide synthase from Geobacter metallireducens (strain ATCC 53774 / DSM 7210 / GS-15).